We begin with the raw amino-acid sequence, 228 residues long: Phosphoribosylformylglycinamidine synthase subunit PurQ (228 aa).

One can recognise a Glutamine amidotransferase type-1 domain in the interval 3–225; the sequence is FAVLVFPGSN…LTTLKSGVVT (223 aa). The active-site Nucleophile is the Cys-86. Catalysis depends on residues His-194 and Glu-196.

As to quaternary structure, part of the FGAM synthase complex composed of 1 PurL, 1 PurQ and 2 PurS subunits.

The protein localises to the cytoplasm. The catalysed reaction is N(2)-formyl-N(1)-(5-phospho-beta-D-ribosyl)glycinamide + L-glutamine + ATP + H2O = 2-formamido-N(1)-(5-O-phospho-beta-D-ribosyl)acetamidine + L-glutamate + ADP + phosphate + H(+). The enzyme catalyses L-glutamine + H2O = L-glutamate + NH4(+). Its pathway is purine metabolism; IMP biosynthesis via de novo pathway; 5-amino-1-(5-phospho-D-ribosyl)imidazole from N(2)-formyl-N(1)-(5-phospho-D-ribosyl)glycinamide: step 1/2. In terms of biological role, part of the phosphoribosylformylglycinamidine synthase complex involved in the purines biosynthetic pathway. Catalyzes the ATP-dependent conversion of formylglycinamide ribonucleotide (FGAR) and glutamine to yield formylglycinamidine ribonucleotide (FGAM) and glutamate. The FGAM synthase complex is composed of three subunits. PurQ produces an ammonia molecule by converting glutamine to glutamate. PurL transfers the ammonia molecule to FGAR to form FGAM in an ATP-dependent manner. PurS interacts with PurQ and PurL and is thought to assist in the transfer of the ammonia molecule from PurQ to PurL. The sequence is that of Phosphoribosylformylglycinamidine synthase subunit PurQ from Latilactobacillus sakei subsp. sakei (strain 23K) (Lactobacillus sakei subsp. sakei).